The chain runs to 281 residues: Nhr-229 coiled coil domain containing nccd-1 (281 aa).

The protein is Nhr-229 coiled coil domain containing nccd-1 of Caenorhabditis elegans.